A 392-amino-acid chain; its full sequence is Succinate--CoA ligase [ADP-forming] subunit beta (392 aa).

An ATP-grasp domain is found at 9-247 (KAILRKYGVA…VTEEDPLEVE (239 aa)). ATP is bound by residues K49, 56-58 (GRG), E102, L105, and E110. The Mg(2+) site is built by N202 and D216. Residues N267 and 324-326 (GIL) contribute to the substrate site.

It belongs to the succinate/malate CoA ligase beta subunit family. As to quaternary structure, heterotetramer of two alpha and two beta subunits. The cofactor is Mg(2+).

It carries out the reaction succinate + ATP + CoA = succinyl-CoA + ADP + phosphate. The enzyme catalyses GTP + succinate + CoA = succinyl-CoA + GDP + phosphate. Its pathway is carbohydrate metabolism; tricarboxylic acid cycle; succinate from succinyl-CoA (ligase route): step 1/1. Its function is as follows. Succinyl-CoA synthetase functions in the citric acid cycle (TCA), coupling the hydrolysis of succinyl-CoA to the synthesis of either ATP or GTP and thus represents the only step of substrate-level phosphorylation in the TCA. The beta subunit provides nucleotide specificity of the enzyme and binds the substrate succinate, while the binding sites for coenzyme A and phosphate are found in the alpha subunit. In Koribacter versatilis (strain Ellin345), this protein is Succinate--CoA ligase [ADP-forming] subunit beta.